The sequence spans 154 residues: 6,7-dimethyl-8-ribityllumazine synthase (154 aa).

5-amino-6-(D-ribitylamino)uracil is bound by residues Phe-21, 55–57 (AFE), and 79–81 (CVI). 84-85 (AT) serves as a coordination point for (2S)-2-hydroxy-3-oxobutyl phosphate. His-87 (proton donor) is an active-site residue. Residue Phe-112 coordinates 5-amino-6-(D-ribitylamino)uracil. Arg-126 lines the (2S)-2-hydroxy-3-oxobutyl phosphate pocket.

This sequence belongs to the DMRL synthase family. Forms an icosahedral capsid composed of 60 subunits, arranged as a dodecamer of pentamers.

The catalysed reaction is (2S)-2-hydroxy-3-oxobutyl phosphate + 5-amino-6-(D-ribitylamino)uracil = 6,7-dimethyl-8-(1-D-ribityl)lumazine + phosphate + 2 H2O + H(+). It functions in the pathway cofactor biosynthesis; riboflavin biosynthesis; riboflavin from 2-hydroxy-3-oxobutyl phosphate and 5-amino-6-(D-ribitylamino)uracil: step 1/2. Its function is as follows. Catalyzes the formation of 6,7-dimethyl-8-ribityllumazine by condensation of 5-amino-6-(D-ribitylamino)uracil with 3,4-dihydroxy-2-butanone 4-phosphate. This is the penultimate step in the biosynthesis of riboflavin. The polypeptide is 6,7-dimethyl-8-ribityllumazine synthase (Staphylococcus aureus (strain Newman)).